The chain runs to 327 residues: uncharacterized protein (327 aa).

A disordered region spans residues 12 to 31 (PLGTTKSYHMNTSTVSPPSP). The next 2 membrane-spanning stretches (helical) occupy residues 183-203 (VSSPSVEVYIAGCCGGVPVIL) and 292-312 (VGVGIGLGMCLGVGIGVGLLM).

The protein resides in the membrane. This is an uncharacterized protein from Arabidopsis thaliana (Mouse-ear cress).